A 224-amino-acid polypeptide reads, in one-letter code: Urease accessory protein UreG (224 aa).

The span at 1-20 shows a compositional bias: basic residues; it reads MATHSHPHSHTVPARPRRVR. Residues 1-25 form a disordered region; that stretch reads MATHSHPHSHTVPARPRRVRKPGEP. 32–39 lines the GTP pocket; the sequence is GPVGSGKT.

The protein belongs to the SIMIBI class G3E GTPase family. UreG subfamily. Homodimer. UreD, UreF and UreG form a complex that acts as a GTP-hydrolysis-dependent molecular chaperone, activating the urease apoprotein by helping to assemble the nickel containing metallocenter of UreC. The UreE protein probably delivers the nickel.

The protein resides in the cytoplasm. In terms of biological role, facilitates the functional incorporation of the urease nickel metallocenter. This process requires GTP hydrolysis, probably effectuated by UreG. The sequence is that of Urease accessory protein UreG from Mycobacterium bovis (strain ATCC BAA-935 / AF2122/97).